A 361-amino-acid polypeptide reads, in one-letter code: Phosphoserine aminotransferase (361 aa).

Arginine 42 is an L-glutamate binding site. Pyridoxal 5'-phosphate is bound by residues alanine 76–threonine 77, tryptophan 102, threonine 152, aspartate 172, and glutamine 195. Position 196 is an N6-(pyridoxal phosphate)lysine (lysine 196). Residue asparagine 237 to threonine 238 participates in pyridoxal 5'-phosphate binding.

The protein belongs to the class-V pyridoxal-phosphate-dependent aminotransferase family. SerC subfamily. As to quaternary structure, homodimer. It depends on pyridoxal 5'-phosphate as a cofactor.

It is found in the cytoplasm. The catalysed reaction is O-phospho-L-serine + 2-oxoglutarate = 3-phosphooxypyruvate + L-glutamate. The enzyme catalyses 4-(phosphooxy)-L-threonine + 2-oxoglutarate = (R)-3-hydroxy-2-oxo-4-phosphooxybutanoate + L-glutamate. Its pathway is amino-acid biosynthesis; L-serine biosynthesis; L-serine from 3-phospho-D-glycerate: step 2/3. The protein operates within cofactor biosynthesis; pyridoxine 5'-phosphate biosynthesis; pyridoxine 5'-phosphate from D-erythrose 4-phosphate: step 3/5. Its function is as follows. Catalyzes the reversible conversion of 3-phosphohydroxypyruvate to phosphoserine and of 3-hydroxy-2-oxo-4-phosphonooxybutanoate to phosphohydroxythreonine. The polypeptide is Phosphoserine aminotransferase (Xanthomonas axonopodis pv. citri (strain 306)).